We begin with the raw amino-acid sequence, 990 residues long: A-type ATP synthase subunit B (990 aa).

Residues 491–614 (VAGLIASDGS…LQLLLKRLGV (124 aa)) form the DOD-type homing endonuclease domain.

The protein belongs to the ATPase alpha/beta chains family. In terms of assembly, has multiple subunits with at least A(3), B(3), C, D, E, F, H, I and proteolipid K(x). In terms of processing, this protein undergoes a protein self splicing that involves a post-translational excision of the VDE intervening region (intein) followed by peptide ligation.

Its subcellular location is the cell membrane. Functionally, component of the A-type ATP synthase that produces ATP from ADP in the presence of a proton gradient across the membrane. The B chain is a regulatory subunit. This chain is A-type ATP synthase subunit B, found in Methanopyrus kandleri (strain AV19 / DSM 6324 / JCM 9639 / NBRC 100938).